We begin with the raw amino-acid sequence, 546 residues long: MALSAAASTLARLGYYEKLAGILGIIGLVLLFWQRTRQPFYPDLPLAGETPHRRWFSLRTRFRYYTDCASLFNEAYHTVRFHASTSSSSTLSRLNAHASQYTKHGKGVLLPSVGVHTAVVMPESALDWAMSQPDSALSITHAFADLNQTRYSLGDARYWRDPWQLTLVKAHLAAVTPALVPQLNDELADALAKRLGTDTDSWREMELETTLRRVVAQTLSRLIVGPELCRDEGYLDLAYKVVLGVMTTIFATLPYPDLVRAVTGPLASWHTQRRISRIQRHLEPLYRERLAILRSAKEDQPPDLLMAMMRFAQKKRPEELADPAIIARRVCAANFVAMHQTTIVLTNIILHVLGSDAEFSTIAALRSEAAAHLLSSERITKDAFAQMKVADSVAREATRLNFPLGGRASPRTVMRDGLVSPEGIRLQRGTTVSWLAGCAQLDPEAFPEPRRFDPFRFSRGDGDGEGERDTFVKTSARYLPWGHGKHACPGRFVVDYVVKMALAQLVTKYDLAWPEDYGGKQPPSVWLAELSVPPPRARIMVRRRKV.

The chain crosses the membrane as a helical span at residues 13 to 33 (LGYYEKLAGILGIIGLVLLFW). The N-linked (GlcNAc...) asparagine glycan is linked to Asn147. Residue Cys488 coordinates heme.

This sequence belongs to the cytochrome P450 family. Requires heme as cofactor.

It is found in the membrane. Its pathway is secondary metabolite biosynthesis. Cytochrome P450 monooxygenase; part of the gene cluster that mediates the biosynthesis of fumosorinone, a 2-pyridone alkaloid that acts as an inhibitor of protein tyrosine phosphatase 1B which is implicated asa negative regulator of insulin receptor signaling and a potential drug target for the treatment of type II diabetes and other associated metabolic syndromes. The polyketide-amino acid backbone of fumosorinone is first assembled by the PKS-NRPS hybrid fumoS. The PKS modules condense one acetyl-CoA starter unit with 7 malonyl-CoA units, programmed C-methylations occurring after the first 3 and the sixth extensions, and cycles of full reduction occurring after the first 2 extensions. Because fumoS lacks a designated enoyl reductase (ER) domain, the required activity is provided the enoyl reductase fumoC. Upon formation of the polyketide backbone on the thiotemplate, the polyketide is transferred to the NRPS module and linked to tyrosine to produce the acyltetramic acid intermediate called prefumosorinone A. The cytochrome P450 monooxygenase fumoA then probably catalyzes an unprecedented oxidative ring expansion of prefumosorinone A to form prefumosorinone B which contains the 2-pyridone core of fumosorinone. The cytochrome P450 monooxygenase fumoB might hydroxylate the nitrogen of prefumosorinone B, but not the acyltetramic acid prefumosorinone A, to form fumosorinone. The polypeptide is Cytochrome P450 monooxygenase fumoB (Cordyceps fumosorosea (strain ARSEF 2679) (Isaria fumosorosea)).